Reading from the N-terminus, the 296-residue chain is uncharacterized protein (296 aa).

A coiled-coil region spans residues 129 to 170 (VKELKDLIRTVADEHMKMKREHEAAMKELTLLINNQKQQQQQ). Residues 165–187 (KQQQQQPVPMPRNSTATRPKNLA) are disordered.

This is an uncharacterized protein from Ostreid herpesvirus 1 (isolate France) (OsHV-1).